A 366-amino-acid chain; its full sequence is Structure-specific endonuclease subunit SLX1 (366 aa).

Positions 14–95 (AFYCCYLLRS…QNTHATRHID (82 aa)) constitute a GIY-YIG domain. Disordered regions lie at residues 31 to 59 (IGSTPNPARRLGQHNGSSKGGAKRTSMQG) and 102 to 124 (RAEELQKGKKKATSPGRRRKRPP). Residues 109 to 123 (GKKKATSPGRRRKRP) show a composition bias toward basic residues. The SLX1-type zinc-finger motif lies at 234-289 (CGVCKNPADMSSSLILVCPIEACQTVSHLSCLSNKFLTEGGELETLVPLEGTCPGC). Residues 317 to 366 (KPKRKRKSDNPAESDAADGQALEQEDEELDETWMEDMSQDEEPSPVKKSR) are disordered. A compositionally biased stretch (acidic residues) spans 339 to 359 (EQEDEELDETWMEDMSQDEEP).

Belongs to the SLX1 family. In terms of assembly, forms a heterodimer with SLX4. It depends on a divalent metal cation as a cofactor.

It localises to the nucleus. Catalytic subunit of the SLX1-SLX4 structure-specific endonuclease that resolves DNA secondary structures generated during DNA repair and recombination. Has endonuclease activity towards branched DNA substrates, introducing single-strand cuts in duplex DNA close to junctions with ss-DNA. This is Structure-specific endonuclease subunit SLX1 from Phaeosphaeria nodorum (strain SN15 / ATCC MYA-4574 / FGSC 10173) (Glume blotch fungus).